The following is a 507-amino-acid chain: Peroxisomal membrane protein PEX14 (507 aa).

Composition is skewed to polar residues over residues 1 to 10 (MATHQQTQPP) and 32 to 48 (EVQQ…SVFK). The interval 1-52 (MATHQQTQPPSDFPALADENSQIPEATKPANEVQQATIAQDPPTSVFKNSEP) is disordered. The Peroxisomal segment spans residues 1–152 (MATHQQTQPP…QAAFLSRFRW (152 aa)). Involved in interaction with PEX5 regions lie at residues 58 to 65 (IQNAIKFL) and 78 to 97 (RRSF…EAFR). The helical transmembrane segment at 153–173 (YHAILAVGVLAASGAGTAVFI) threads the bilayer. Topologically, residues 174 to 507 (KRSLIPRFKS…EQQHISQEGN (334 aa)) are cytoplasmic. The segment covering 288–302 (VTTARKPYTNGSNVD) has biased composition (polar residues). Disordered regions lie at residues 288-329 (VTTA…PKSY), 344-394 (NIRE…NPRS), 409-435 (ANQN…QPPP), and 448-507 (PKPQ…QEGN). The span at 308–322 (ARSASPPAAPADSSA) shows a compositional bias: low complexity. Polar residues predominate over residues 378–394 (QDESSNGQWWQQKNPRS).

This sequence belongs to the peroxin-14 family. As to quaternary structure, interacts with PEX13; forming the PEX13-PEX14 docking complex. Interacts with PEX5 (via WxxxF/Y motifs). In terms of tissue distribution, expressed in flowers, siliques, leaves and roots.

It is found in the peroxisome membrane. In terms of biological role, component of the PEX13-PEX14 docking complex, a translocon channel that specifically mediates the import of peroxisomal cargo proteins bound to PEX5 receptor. The PEX13-PEX14 docking complex forms a large import pore which can be opened to a diameter of about 9 nm. Mechanistically, PEX5 receptor along with cargo proteins associates with the PEX14 subunit of the PEX13-PEX14 docking complex in the cytosol, leading to the insertion of the receptor into the organelle membrane with the concomitant translocation of the cargo into the peroxisome matrix. The polypeptide is Peroxisomal membrane protein PEX14 (Arabidopsis thaliana (Mouse-ear cress)).